Here is a 573-residue protein sequence, read N- to C-terminus: Potassium-transporting ATPase potassium-binding subunit (573 aa).

The next 10 membrane-spanning stretches (helical) occupy residues 3–23 (AEGL…TPLL), 65–85 (GYTL…YALL), 136–156 (GLTV…VALI), 179–199 (LYVL…QGVP), 254–274 (LTNL…IYSF), 286–306 (ALWT…WWAE), 383–403 (AGLY…GLMV), 423–443 (VIAV…TTVV), 489–509 (GLGL…LAIA), and 531–551 (LFIT…FFPA).

This sequence belongs to the KdpA family. In terms of assembly, the system is composed of three essential subunits: KdpA, KdpB and KdpC.

It localises to the cell inner membrane. Its function is as follows. Part of the high-affinity ATP-driven potassium transport (or Kdp) system, which catalyzes the hydrolysis of ATP coupled with the electrogenic transport of potassium into the cytoplasm. This subunit binds the periplasmic potassium ions and delivers the ions to the membrane domain of KdpB through an intramembrane tunnel. The polypeptide is Potassium-transporting ATPase potassium-binding subunit (Rhodospirillum centenum (strain ATCC 51521 / SW)).